Here is a 667-residue protein sequence, read N- to C-terminus: Zeaxanthin epoxidase, chloroplastic (667 aa).

The transit peptide at 1 to 59 directs the protein to the chloroplast; that stretch reads MGSTPFCYSINPSPSKLDFTRTHVFSPVSKQFYLDLSSFSGKPGGVSGFRSRRALLGVK. Residues 82 to 110 and 360 to 373 each bind FAD; these read RVLVAGGGIGGLVFALAAKKKGFDVLVFE and GFTWGKGRVTLLGD. Positions 558 to 612 constitute an FHA domain; it reads CIVGSEPDQDFPGMRIVIPSSQVSKMHARVIYKDGAFFLMDLRSEHGTYVTDNEG.

FAD serves as cofactor. Expressed in leaves, stems and flowers, and at lower levels in roots and siliques.

Its subcellular location is the plastid. It is found in the chloroplast. The enzyme catalyses all-trans-zeaxanthin + 4 reduced [2Fe-2S]-[ferredoxin] + 2 O2 + 4 H(+) = all-trans-violaxanthin + 4 oxidized [2Fe-2S]-[ferredoxin] + 2 H2O. It functions in the pathway plant hormone biosynthesis; abscisate biosynthesis. Its function is as follows. Zeaxanthin epoxidase that plays an important role in the xanthophyll cycle and abscisic acid (ABA) biosynthesis. Converts zeaxanthin into antheraxanthin and subsequently violaxanthin. Required for resistance to osmotic and drought stresses, ABA-dependent stomatal closure, seed development and dormancy, modulation of defense gene expression and disease resistance and non-photochemical quencing (NPQ). Through its role in ABA biosynthesis, regulates the expression of stress-responsive genes such as RD29A during osmotic stress and is required for normal plant growth during vegetative development. Is required for late skotomorphogenic growth through its role in the xanthophyll carotenoids neoxanthin, violaxanthin and antheraxanthin biosynthesis. Required for beta-aminobutyric acid (BABA)-induced priming in disease resistance, tolerance to salt and drought stresses and sterility. Participates in NPQ by regulating the level of zeaxanthin in photosynthetic energy conversion. NPQ is a process that maintains the balance between dissipation and utilization of light energy to minimize the generation of oxidizing molecules and the molecular damages they can generate. The protein is Zeaxanthin epoxidase, chloroplastic (ZEP) of Arabidopsis thaliana (Mouse-ear cress).